The sequence spans 504 residues: Maturase K (504 aa).

The protein belongs to the intron maturase 2 family. MatK subfamily.

Its subcellular location is the plastid. It is found in the chloroplast. In terms of biological role, usually encoded in the trnK tRNA gene intron. Probably assists in splicing its own and other chloroplast group II introns. This Vauquelinia californica (Arizona rosewood) protein is Maturase K.